A 171-amino-acid chain; its full sequence is Lipoprotein signal peptidase (171 aa).

The next 3 membrane-spanning stretches (helical) occupy residues 7-27 (GLIALLATLALDQASKLWLYF), 64-84 (LGRWLLVAVSLAAVIGLSVWM), and 88-108 (GSRLLAVALGLIVGGALGNAI). Catalysis depends on residues Asp-118 and Asp-136. A helical membrane pass occupies residues 128 to 148 (SWYVFNVADAAIVAGVVGLIL).

It belongs to the peptidase A8 family.

The protein localises to the cell inner membrane. It catalyses the reaction Release of signal peptides from bacterial membrane prolipoproteins. Hydrolyzes -Xaa-Yaa-Zaa-|-(S,diacylglyceryl)Cys-, in which Xaa is hydrophobic (preferably Leu), and Yaa (Ala or Ser) and Zaa (Gly or Ala) have small, neutral side chains.. It participates in protein modification; lipoprotein biosynthesis (signal peptide cleavage). Functionally, this protein specifically catalyzes the removal of signal peptides from prolipoproteins. This chain is Lipoprotein signal peptidase, found in Methylorubrum extorquens (strain PA1) (Methylobacterium extorquens).